A 349-amino-acid polypeptide reads, in one-letter code: Probable FBD-associated F-box protein At5g38565 (349 aa).

The region spanning 1–47 is the F-box domain; sequence MDIFNGLPDDVLVKILSFVPTKVAVSTSILSKRWEFLWMWLPRLDFG. An FBD domain is found at 263-311; sequence CWNQPISVPECLLESLQIFNLSHYFGKQQDLDFVVYILKNACHLKTATI.

This chain is Probable FBD-associated F-box protein At5g38565, found in Arabidopsis thaliana (Mouse-ear cress).